The sequence spans 133 residues: MAYRKMLKSKIHRACVTQADLDYEGSITISPELLKAANILPYEAVNVWNITAGTRFETYAITGEKGSTDICVNGAAAHLVTPGDLVIIASFTQILEEDCAAHEPTVVFVDQFNRLKEIRPERIGVKNKIPCSA.

The active-site Schiff-base intermediate with substrate; via pyruvic acid is S26. Pyruvic acid (Ser) is present on S26. T58 provides a ligand contact to substrate. The active-site Proton donor is Y59. 74-76 (GAA) contacts substrate.

This sequence belongs to the PanD family. In terms of assembly, heterooctamer of four alpha and four beta subunits. It depends on pyruvate as a cofactor. In terms of processing, is synthesized initially as an inactive proenzyme, which is activated by self-cleavage at a specific serine bond to produce a beta-subunit with a hydroxyl group at its C-terminus and an alpha-subunit with a pyruvoyl group at its N-terminus.

The protein localises to the cytoplasm. The enzyme catalyses L-aspartate + H(+) = beta-alanine + CO2. Its pathway is cofactor biosynthesis; (R)-pantothenate biosynthesis; beta-alanine from L-aspartate: step 1/1. In terms of biological role, catalyzes the pyruvoyl-dependent decarboxylation of aspartate to produce beta-alanine. The sequence is that of Aspartate 1-decarboxylase from Legionella pneumophila (strain Lens).